The following is a 314-amino-acid chain: Carbamate kinase (314 aa).

The protein belongs to the carbamate kinase family. In terms of assembly, homodimer.

The protein resides in the cytoplasm. It catalyses the reaction hydrogencarbonate + NH4(+) + ATP = carbamoyl phosphate + ADP + H2O + H(+). The polypeptide is Carbamate kinase (cpkA) (Pyrococcus horikoshii (strain ATCC 700860 / DSM 12428 / JCM 9974 / NBRC 100139 / OT-3)).